The following is a 104-amino-acid chain: Large ribosomal subunit protein uL24 (104 aa).

This sequence belongs to the universal ribosomal protein uL24 family. As to quaternary structure, part of the 50S ribosomal subunit.

Functionally, one of two assembly initiator proteins, it binds directly to the 5'-end of the 23S rRNA, where it nucleates assembly of the 50S subunit. Its function is as follows. One of the proteins that surrounds the polypeptide exit tunnel on the outside of the subunit. The chain is Large ribosomal subunit protein uL24 from Caulobacter sp. (strain K31).